Here is a 345-residue protein sequence, read N- to C-terminus: Methionine import ATP-binding protein MetN (345 aa).

The 240-residue stretch at Ile-2–Ile-241 folds into the ABC transporter domain. Position 38–45 (Gly-38–Ser-45) interacts with ATP.

This sequence belongs to the ABC transporter superfamily. Methionine importer (TC 3.A.1.24) family. In terms of assembly, the complex is composed of two ATP-binding proteins (MetN), two transmembrane proteins (MetI) and a solute-binding protein (MetQ).

The protein localises to the cell inner membrane. It carries out the reaction L-methionine(out) + ATP + H2O = L-methionine(in) + ADP + phosphate + H(+). The enzyme catalyses D-methionine(out) + ATP + H2O = D-methionine(in) + ADP + phosphate + H(+). Its function is as follows. Part of the ABC transporter complex MetNIQ involved in methionine import. Responsible for energy coupling to the transport system. The polypeptide is Methionine import ATP-binding protein MetN (Haemophilus influenzae (strain 86-028NP)).